Reading from the N-terminus, the 151-residue chain is Large ribosomal subunit protein uL16 (151 aa).

The protein belongs to the universal ribosomal protein uL16 family. As to quaternary structure, part of the 50S ribosomal subunit.

In terms of biological role, binds 23S rRNA and is also seen to make contacts with the A and possibly P site tRNAs. The sequence is that of Large ribosomal subunit protein uL16 from Chloroflexus aurantiacus (strain ATCC 29364 / DSM 637 / Y-400-fl).